Reading from the N-terminus, the 145-residue chain is UPF0735 ACT domain-containing protein CLH_2637 (145 aa).

The 76-residue stretch at 69–144 (TFNLIVKDQT…YVEKIEFVAM (76 aa)) folds into the ACT domain.

The protein belongs to the UPF0735 family.

This chain is UPF0735 ACT domain-containing protein CLH_2637, found in Clostridium botulinum (strain Alaska E43 / Type E3).